A 195-amino-acid polypeptide reads, in one-letter code: uncharacterized protein (195 aa).

In terms of domain architecture, HTH tetR-type spans 6-66; the sequence is VESRKRLLKA…ELITDFHSRV (61 aa). Positions 29-48 form a DNA-binding region, H-T-H motif; it reads KVSEIVKKAGFTQPSFYLYF.

This is an uncharacterized protein from Bacillus subtilis (strain 168).